Here is a 476-residue protein sequence, read N- to C-terminus: ATP synthase subunit beta (476 aa).

157–164 (GGAGVGKT) is an ATP binding site.

This sequence belongs to the ATPase alpha/beta chains family. F-type ATPases have 2 components, CF(1) - the catalytic core - and CF(0) - the membrane proton channel. CF(1) has five subunits: alpha(3), beta(3), gamma(1), delta(1), epsilon(1). CF(0) has three main subunits: a(1), b(2) and c(9-12). The alpha and beta chains form an alternating ring which encloses part of the gamma chain. CF(1) is attached to CF(0) by a central stalk formed by the gamma and epsilon chains, while a peripheral stalk is formed by the delta and b chains.

It localises to the cell membrane. It carries out the reaction ATP + H2O + 4 H(+)(in) = ADP + phosphate + 5 H(+)(out). Functionally, produces ATP from ADP in the presence of a proton gradient across the membrane. The catalytic sites are hosted primarily by the beta subunits. This Mycoplasma genitalium (strain ATCC 33530 / DSM 19775 / NCTC 10195 / G37) (Mycoplasmoides genitalium) protein is ATP synthase subunit beta.